The chain runs to 1086 residues: ATP-dependent helicase/deoxyribonuclease subunit B (1086 aa).

Belongs to the helicase family. AddB/RexB type 2 subfamily. As to quaternary structure, heterodimer of AddA and RexB. Mg(2+) is required as a cofactor.

Functionally, the heterodimer acts as both an ATP-dependent DNA helicase and an ATP-dependent, dual-direction single-stranded exonuclease. Recognizes the chi site generating a DNA molecule suitable for the initiation of homologous recombination. This subunit has 5' -&gt; 3' nuclease activity but not helicase activity. This is ATP-dependent helicase/deoxyribonuclease subunit B from Streptococcus uberis (strain ATCC BAA-854 / 0140J).